A 281-amino-acid chain; its full sequence is 2,3,4,5-tetrahydropyridine-2,6-dicarboxylate N-succinyltransferase (281 aa).

Substrate-binding residues include arginine 108 and aspartate 145.

This sequence belongs to the transferase hexapeptide repeat family. In terms of assembly, homotrimer.

It is found in the cytoplasm. It carries out the reaction (S)-2,3,4,5-tetrahydrodipicolinate + succinyl-CoA + H2O = (S)-2-succinylamino-6-oxoheptanedioate + CoA. Its pathway is amino-acid biosynthesis; L-lysine biosynthesis via DAP pathway; LL-2,6-diaminopimelate from (S)-tetrahydrodipicolinate (succinylase route): step 1/3. This chain is 2,3,4,5-tetrahydropyridine-2,6-dicarboxylate N-succinyltransferase, found in Rhodopseudomonas palustris (strain BisA53).